The primary structure comprises 154 residues: uncharacterized protein (154 aa).

The tract at residues 104-124 is disordered; it reads NNNNNDNDNNNKEKEDNDEKE. Positions 112–124 are enriched in basic and acidic residues; the sequence is NNNKEKEDNDEKE.

This is an uncharacterized protein from Dictyostelium discoideum (Social amoeba).